The primary structure comprises 212 residues: Small ribosomal subunit protein eS1 (212 aa).

Belongs to the eukaryotic ribosomal protein eS1 family.

This is Small ribosomal subunit protein eS1 from Ignicoccus hospitalis (strain KIN4/I / DSM 18386 / JCM 14125).